The following is a 359-amino-acid chain: MAP kinase-activated protein kinase 2 (359 aa).

The region spanning 20-281 (VTSNTVLGYG…IQDVISNKWI (262 aa)) is the Protein kinase domain. Residues 26–34 (LGYGINGKV) and Lys49 each bind ATP. Catalysis depends on Asp142, which acts as the Proton acceptor.

The protein belongs to the protein kinase superfamily. CAMK Ser/Thr protein kinase family. Post-translationally, phosphorylated and activated by MAP kinase.

It catalyses the reaction L-seryl-[protein] + ATP = O-phospho-L-seryl-[protein] + ADP + H(+). The enzyme catalyses L-threonyl-[protein] + ATP = O-phospho-L-threonyl-[protein] + ADP + H(+). Its function is as follows. Its physiological substrate seems to be the small heat shock protein (HSP27/HSP25). In Drosophila melanogaster (Fruit fly), this protein is MAP kinase-activated protein kinase 2 (MAPk-Ak2).